We begin with the raw amino-acid sequence, 97 residues long: Conotoxin Cal6.1e (97 aa).

The N-terminal stretch at 1–22 (MKLTTVLIVAVLVLAACQFTVT) is a signal peptide. The interval 23–49 (DNSGDDTENPSLRSAGENQNPDSTKTI) is disordered. A propeptide spanning residues 23 to 60 (DNSGDDTENPSLRSAGENQNPDSTKTITARATRARTNM) is cleaved from the precursor. Residues 31–45 (NPSLRSAGENQNPDS) are compositionally biased toward polar residues. 3 cysteine pairs are disulfide-bonded: cysteine 71/cysteine 87, cysteine 78/cysteine 91, and cysteine 86/cysteine 96.

The protein belongs to the conotoxin O1 superfamily. In terms of tissue distribution, expressed by the venom duct.

The protein localises to the secreted. In terms of biological role, probable neurotoxin with unknown target. Possibly targets ion channels. In Californiconus californicus (California cone), this protein is Conotoxin Cal6.1e.